The chain runs to 332 residues: 2-oxoglutarate-dependent dioxygenase FG08081 (332 aa).

The Fe2OG dioxygenase domain occupies 176–280 (RSKSTLYFLH…RYSISYFLRA (105 aa)). His-201, Asp-203, and His-258 together coordinate Fe cation. Arg-271 contacts 2-oxoglutarate.

Belongs to the iron/ascorbate-dependent oxidoreductase family. Fe(2+) is required as a cofactor.

Its pathway is mycotoxin biosynthesis. Functionally, 2-oxoglutarate-dependent dioxygenase; part of the gene cluster that mediates the biosynthesis of butenolide, a mycotoxin that shows antibiotic activity but does not seem to play a major role in the spread of head blight in wheat. Butenolide is derived from glutamic acid via a 4-acetamido-2-butenoic acid intermediate. The predicted function of the NADH:flavin oxidoreductase FG08077, the cytochrome P450 monooxygenase FG08079, the decarboxylase FG08083, and the putative acetyltransferase FG08082 are consistent with this pathway, however, the respective activities of the butelonide biosynthesis cluster enzymes have still to be experimentally determined. The protein is 2-oxoglutarate-dependent dioxygenase FG08081 of Gibberella zeae (strain ATCC MYA-4620 / CBS 123657 / FGSC 9075 / NRRL 31084 / PH-1) (Wheat head blight fungus).